A 265-amino-acid polypeptide reads, in one-letter code: Tryptophan synthase alpha chain (265 aa).

Catalysis depends on proton acceptor residues E49 and D60.

It belongs to the TrpA family. Tetramer of two alpha and two beta chains.

The enzyme catalyses (1S,2R)-1-C-(indol-3-yl)glycerol 3-phosphate + L-serine = D-glyceraldehyde 3-phosphate + L-tryptophan + H2O. It participates in amino-acid biosynthesis; L-tryptophan biosynthesis; L-tryptophan from chorismate: step 5/5. In terms of biological role, the alpha subunit is responsible for the aldol cleavage of indoleglycerol phosphate to indole and glyceraldehyde 3-phosphate. The chain is Tryptophan synthase alpha chain from Desulfatibacillum aliphaticivorans.